The primary structure comprises 179 residues: MQDRVERVTRYIDNVMANTEGTRAEGVYVVSVALKGRAGQQKLEVLVDSDKGIAVEQCAWVSRRILEKLEEDDEPLSEEIAIEVSSPGLGTPLQLPRQYYRHLGKLLHVRYRTPEGAEAEIEGYLQEAQLDGVNGGDSADSVIVLKPKVQGKRPRNAQPLENIRLPLSRIIKAVPEAEL.

The protein belongs to the RimP family.

The protein localises to the cytoplasm. Its function is as follows. Required for maturation of 30S ribosomal subunits. The polypeptide is Ribosome maturation factor RimP (Chlorobium chlorochromatii (strain CaD3)).